A 1413-amino-acid chain; its full sequence is Alpha-latrocrustotoxin-Lt1a (1413 aa).

A propeptide spanning residues Val-1 to Arg-28 is cleaved from the precursor. Positions Ala-238–Val-257 are helix H8 is the probable transmembrane region of the tetrameric pore inserted in the target cell membrane. 20 ANK repeats span residues Asp-457–Ala-490, Met-494–Val-524, Asn-528–Val-557, Asn-562–Ala-592, Ala-596–Ile-625, Ser-629–Leu-658, Asn-664–Ala-694, Lys-699–Thr-729, Gln-733–Gln-762, Asn-766–Ala-795, Asp-799–Ala-828, Ile-832–Asn-861, Arg-866–Glu-895, Asp-899–Leu-928, Arg-965–Glu-995, Asp-996–Ala-1026, Asn-1031–Lys-1072, Gln-1077–Lys-1106, Arg-1109–Thr-1139, and Glu-1143–Ala-1172. Residues Arg-1193–Lys-1413 constitute a propeptide that is removed on maturation.

This sequence belongs to the cationic peptide 01 (latrotoxin) family. 01 (alpha-latrocrustotoxin) subfamily. As to quaternary structure, homotetramer in membranes. As to expression, expressed by the venom gland.

The protein localises to the secreted. It localises to the target cell membrane. Crustacean-selective presynaptic neurotoxin that induces neurotransmitter exocytosis. May bind to crustacean neurexin-1 homolog, adhesion G protein-coupled receptor L1 homolog, and receptor-type tyrosine-protein phosphatase S homolog, and induces neurotransmitter exocytosis both by forming tetrameric pores in membranes and signaling via G protein-coupled receptor. This recombinant protein form channels in artificial membrane bilayers, that are stabilized by calcium ions and allow calcium flux at negative membrane potentials. The sequence is that of Alpha-latrocrustotoxin-Lt1a from Latrodectus tredecimguttatus (Mediterranean black widow spider).